A 443-amino-acid chain; its full sequence is Amino-acid acetyltransferase (443 aa).

One can recognise an N-acetyltransferase domain in the interval 296-435 (EQIRRATIND…KEMYNYQRRS (140 aa)).

Belongs to the acetyltransferase family. ArgA subfamily. Homohexamer.

It is found in the cytoplasm. It catalyses the reaction L-glutamate + acetyl-CoA = N-acetyl-L-glutamate + CoA + H(+). It participates in amino-acid biosynthesis; L-arginine biosynthesis; N(2)-acetyl-L-ornithine from L-glutamate: step 1/4. This is Amino-acid acetyltransferase from Enterobacter sp. (strain 638).